Consider the following 753-residue polypeptide: Bile salt-activated lipase (753 aa).

The signal sequence occupies residues 1 to 20; that stretch reads MGRLQLVVLGLTCCWAVASA. Residues 21–121 are heparin-binding; the sequence is AKLGAVYTEG…KQVSRDLPVM (101 aa). A disulfide bridge connects residues Cys-84 and Cys-100. Asn-207 is a glycosylation site (N-linked (GlcNAc...) (complex) asparagine). Ser-214 acts as the Acyl-ester intermediate in catalysis. Cys-266 and Cys-277 are joined by a disulfide. Residues Asp-340 and His-455 each act as charge relay system in the active site. Positions 555 to 753 are disordered; it reads QEATPVPPTG…EAQMPAVIRF (199 aa). Thr-558, Thr-569, and Thr-579 each carry an O-linked (GalNAc...) threonine glycan. 17 repeat units span residues 559–569, 570–580, 581–591, 592–602, 603–613, 614–624, 625–635, 636–646, 647–657, 658–668, 669–679, 680–690, 691–701, 702–712, 713–723, 724–734, and 735–745. Residues 559–745 form a 17 X 11 AA tandem repeats, glycodomain, O-linked (mucin type) region; it reads PVPPTGDSEA…VPPTDDSKEA (187 aa). O-linked (GalNAc...) threonine glycans are attached at residues Thr-607, Thr-618, Thr-629, Thr-640, Thr-651, Thr-662, and Thr-673. Residues 668 to 683 are compositionally biased toward pro residues; sequence PPVPPTGDAGPPPVPP.

This sequence belongs to the type-B carboxylesterase/lipase family. In terms of assembly, interacts with CLC. Post-translationally, N- and O-glycosylated. Mammary gland and pancreas. Detected in pancreatic and duodenal juice (at protein level). Expressed by eosinophils.

It localises to the secreted. It carries out the reaction a triacylglycerol + H2O = a diacylglycerol + a fatty acid + H(+). The catalysed reaction is 1,2,3-tri-(9Z-octadecenoyl)-glycerol + H2O = di-(9Z)-octadecenoylglycerol + (9Z)-octadecenoate + H(+). The enzyme catalyses 1,2,3-trioctanoylglycerol + H2O = dioctanoylglycerol + octanoate + H(+). It catalyses the reaction a sterol ester + H2O = a sterol + a fatty acid + H(+). It carries out the reaction cholesteryl (9Z-octadecenoate) + H2O = cholesterol + (9Z)-octadecenoate + H(+). The catalysed reaction is an acetyl ester + H2O = an aliphatic alcohol + acetate + H(+). The enzyme catalyses a butanoate ester + H2O = an aliphatic alcohol + butanoate + H(+). It catalyses the reaction 9-hexadecanoyloxy-octadecanoate + H2O = 9-hydroxy-octadecanoate + hexadecanoate + H(+). It carries out the reaction 9-(9Z-octadecenoyloxy)-octadecanoate + H2O = 9-hydroxy-octadecanoate + (9Z)-octadecenoate + H(+). The catalysed reaction is 1-hexadecanoyl-sn-glycero-3-phosphocholine + H2O = sn-glycerol 3-phosphocholine + hexadecanoate + H(+). The enzyme catalyses 12-hexadecanoyloxy-octadecanoate + H2O = 12-hydroxyoctadecanoate + hexadecanoate + H(+). It catalyses the reaction 12-(9Z-octadecenoyloxy)-octadecanoate + H2O = 12-hydroxyoctadecanoate + (9Z)-octadecenoate + H(+). It carries out the reaction 13-(9Z-octadecenoyloxy)-octadecanoate + H2O = 13-hydroxy-octadecanoate + (9Z)-octadecenoate + H(+). The catalysed reaction is 9-(9Z-hexadecenoyloxy)-octadecanoate + H2O = (9Z)-hexadecenoate + 9-hydroxy-octadecanoate + H(+). The enzyme catalyses 12-(9Z-hexadecenoyloxy)-octadecanoate + H2O = 12-hydroxyoctadecanoate + (9Z)-hexadecenoate + H(+). It catalyses the reaction 13-(9Z-hexadecenoyloxy)-octadecanoate + H2O = 13-hydroxy-octadecanoate + (9Z)-hexadecenoate + H(+). It carries out the reaction 12-octadecanoyloxy-octadecanoate + H2O = 12-hydroxyoctadecanoate + octadecanoate + H(+). The catalysed reaction is 13-octadecanoyloxy-octadecanoate + H2O = 13-hydroxy-octadecanoate + octadecanoate + H(+). The enzyme catalyses 5-(9Z-hexadecenoyloxy)-octadecanoate + H2O = 5-hydroxy-octadecanoate + (9Z)-hexadecenoate + H(+). It catalyses the reaction 9-octadecanoyloxy-octadecanoate + H2O = 9-hydroxy-octadecanoate + octadecanoate + H(+). Activated by bile salts such as sodium taurocholate. Functionally, catalyzes the hydrolysis of a wide range of substrates including cholesteryl esters, phospholipids, lysophospholipids, di- and tri-acylglycerols, and fatty acid esters of hydroxy fatty acids (FAHFAs). Preferentially hydrolyzes FAHFAs with the ester bond further away from the carboxylate. Unsaturated FAHFAs are hydrolyzed more quickly than saturated FAHFAs. Has an essential role in the complete digestion of dietary lipids and their intestinal absorption, along with the absorption of fat-soluble vitamins. In Homo sapiens (Human), this protein is Bile salt-activated lipase (CEL).